A 34-amino-acid chain; its full sequence is MSDIN-like toxin proprotein 7 (34 aa).

Residues 1–10 (MSDINATRLP) constitute a propeptide that is removed on maturation. A cross-link (cyclopeptide (Ala-Pro)) is located at residues 11–17 (AWLTDCP). Residues 18 to 34 (CVGDDVNRLLTRGESLC) constitute a propeptide that is removed on maturation.

Belongs to the MSDIN fungal toxin family. Processed by the macrocyclase-peptidase enzyme POPB to yield a toxic cyclic heptapeptide. POPB first removes 10 residues from the N-terminus. Conformational trapping of the remaining peptide forces the enzyme to release this intermediate rather than proceed to macrocyclization. The enzyme rebinds the remaining peptide in a different conformation and catalyzes macrocyclization of the N-terminal 7 residues. Expressed in basidiocarps.

Its function is as follows. Probable toxin that belongs to the MSDIN-like toxin family responsible for a large number of food poisoning cases and deaths. In Amanita exitialis (Guangzhou destroying angel), this protein is MSDIN-like toxin proprotein 7.